The following is an 89-amino-acid chain: MSDNNEKQTLRTVEGRVVSNKMDKTVTVLVERQVKHPLYGKYIKRSSKLHAHDADNACNEGDVVRVTEIAPMSKTKNWRVVEIVTRAAV.

It belongs to the universal ribosomal protein uS17 family. As to quaternary structure, part of the 30S ribosomal subunit.

Functionally, one of the primary rRNA binding proteins, it binds specifically to the 5'-end of 16S ribosomal RNA. The chain is Small ribosomal subunit protein uS17 from Xanthomonas campestris pv. campestris (strain 8004).